The chain runs to 232 residues: DNA repair and recombination protein RadB (232 aa).

The protein belongs to the eukaryotic RecA-like protein family. RadB subfamily.

Involved in DNA repair and in homologous recombination. May regulate the cleavage reactions of the branch-structured DNA. Has a very weak ATPase activity that is not stimulated by DNA. Binds DNA but does not promote DNA strands exchange. The sequence is that of DNA repair and recombination protein RadB from Methanosphaera stadtmanae (strain ATCC 43021 / DSM 3091 / JCM 11832 / MCB-3).